Reading from the N-terminus, the 4303-residue chain is Polycystin-1 (4303 aa).

Positions Met1–Ala23 are cleaved as a signal peptide. One can recognise an LRRNT domain in the interval Gly24 to Ala67. Topologically, residues Gly24 to Asn3074 are extracellular. N-linked (GlcNAc...) asparagine glycans are attached at residues Asn50 and Asn89. LRR repeat units follow at residues Asp68–Ser91 and Ala92–Asn113. 2 N-linked (GlcNAc...) asparagine glycosylation sites follow: Asn116 and Asn121. The LRRCT domain maps to Asn125–Glu178. The region spanning Gly177–Ala271 is the WSC domain. N-linked (GlcNAc...) asparagine glycosylation is present at Asn187. The 88-residue stretch at Ser272–Leu359 folds into the PKD 1 domain. Positions Gly415–Glu531 constitute a C-type lectin domain. Disulfide bonds link Cys436–Cys530 and Cys508–Cys522. Positions Ala616–Gln635 are disordered. N-linked (GlcNAc...) asparagine glycans are attached at residues Asn621 and Asn632. The 34-residue stretch at Pro638 to Ser671 folds into the LDL-receptor class A; atypical domain. Disulfide bonds link Cys640-Cys653, Cys647-Cys665, and Cys660-Cys669. The 75-residue stretch at Leu743–Val817 folds into the PKD 2 domain. Asn746, Asn810, Asn841, Asn854, Asn890, Asn921, Asn1004, Asn1010, Asn1034, Asn1072, Asn1113, Asn1178, Asn1194, Asn1240, Asn1269, Asn1336, Asn1348, Asn1382, Asn1450, Asn1455, Asn1474, Asn1518, Asn1541, Asn1554, Asn1563, Asn1647, Asn1661, Asn1733, Asn1791, Asn1834, Asn1867, and Asn1880 each carry an N-linked (GlcNAc...) asparagine glycan. 15 consecutive PKD domains span residues Ala855 to Ala928, Leu935 to Gln1020, Gln1023 to Val1129, Pro1127 to Leu1215, Arg1213 to Arg1298, Leu1294 to Val1383, Asn1382 to Thr1469, Val1468 to Leu1551, Gly1550 to Leu1635, Gly1634 to Leu1721, Gly1719 to Leu1805, Ile1807 to Leu1890, Gly1889 to Leu1974, Pro1977 to Val2057, and Ala2060 to Glu2148. Residues Asn1991, Asn2050, Asn2074, Asn2125, Asn2248, Asn2353, Asn2395, Asn2412, Asn2567, Asn2578, Asn2645, Asn2718, Asn2754, Asn2841, Asn2878, Asn2925, Asn2956, and Asn2994 are each glycosylated (N-linked (GlcNAc...) asparagine). The REJ domain occupies Cys2146 to Pro2833. Residues Pro2862–Arg3063 form the GAIN-B domain. Cysteines 3015 and 3043 form a disulfide. The GPS stretch occupies residues Cys3015–Arg3063. The chain crosses the membrane as a helical span at residues Tyr3075–Leu3095. At His3096 to Arg3277 the chain is on the cytoplasmic side. Residues Phe3118–Glu3233 enclose the PLAT domain. The chain crosses the membrane as a helical span at residues Ile3278–Trp3298. At Tyr3299–Val3323 the chain is on the extracellular side. A helical transmembrane segment spans residues Ala3324–Phe3344. Residues Arg3345–His3559 lie on the Cytoplasmic side of the membrane. The helical transmembrane segment at Gly3560 to Phe3580 threads the bilayer. Residues Pro3581–Pro3582 are Extracellular-facing. A helical membrane pass occupies residues Gly3583–Trp3603. Residues Glu3604 to Lys3665 are Cytoplasmic-facing. The chain crosses the membrane as a helical span at residues Arg3666–Leu3686. Over Ala3687 to Leu3901 the chain is Extracellular. Asn3738, Asn3790, and Asn3845 each carry an N-linked (GlcNAc...) asparagine glycan. A helical membrane pass occupies residues Leu3902 to Trp3922. At His3923 to Ala3935 the chain is on the cytoplasmic side. Residues Trp3936–Leu3956 traverse the membrane as a helical segment. Residues Gly3957–Ser3984 lie on the Extracellular side of the membrane. Residues Ser3985–Gln4005 traverse the membrane as a helical segment. Over Leu4006 to Leu4027 the chain is Cytoplasmic. A helical transmembrane segment spans residues Gly4028 to Val4048. The Extracellular segment spans residues Ser4049–Leu4090. Residues Trp4091–Tyr4110 form a helical membrane-spanning segment. Residues His4111–Thr4303 lie on the Cytoplasmic side of the membrane. Disordered stretches follow at residues Pro4160 to Gly4196 and Leu4243 to Thr4303. Phosphoserine; by PRKX; in vitro is present on Ser4166. Polar residues predominate over residues Ser4185–Asp4195. Residues Glu4220–Ser4251 adopt a coiled-coil conformation. Over residues Arg4253–Ala4269 the composition is skewed to low complexity. The segment covering Leu4292–Thr4303 has biased composition (basic residues).

The protein belongs to the polycystin family. As to quaternary structure, component of the heterotetrameric polycystin channel complex with PKD2; the tetramer contains one PKD1 chain and three PKD2 chains. Interacts with PKD2; the interaction is required for ciliary localization. Interacts with PKD2L1. Interacts with PRKX; involved in differentiation and controlled morphogenesis of the kidney. Interacts (via extracellular domain) with WNT3A, WNT4, WNT5A and WNT9B. Interacts with DVL1 and DVL2. Interacts with NPHP1 (via SH3 domain). Interacts with BBS1, BBS4, BBS5 and TTC8. Interacts with RGS7. Interacts (via the PKD repeats in the N-terminal extracellular region) with EPCIP; the interaction is not dependent on N-glycosylation of either protein. Post-translationally, N-glycosylated. After synthesis, undergoes cleavage between Leu-3048 and Thr-3049 in the GPS region of the GAIN-B domain. Cleavage at the GPS region occurs through a cis-autoproteolytic mechanism involving an ester-intermediate via N-O acyl rearrangement. This process takes place in the early secretory pathway, depends on initial N-glycosylation, and requires the REJ domain. There is evidence that cleavage at GPS region is incomplete. Uncleaved and cleaved products may have different functions in vivo.

It is found in the cell membrane. The protein resides in the cell projection. It localises to the cilium. Its subcellular location is the endoplasmic reticulum. The protein localises to the golgi apparatus. It is found in the vesicle. The protein resides in the secreted. It localises to the extracellular exosome. Its function is as follows. Component of a heteromeric calcium-permeable ion channel formed by PKD1 and PKD2 that is activated by interaction between PKD1 and a Wnt family member, such as WNT3A and WNT9B. Both PKD1 and PKD2 are required for channel activity. Involved in renal tubulogenesis. Involved in fluid-flow mechanosensation by the primary cilium in renal epithelium. Acts as a regulator of cilium length, together with PKD2. The dynamic control of cilium length is essential in the regulation of mechanotransductive signaling. The cilium length response creates a negative feedback loop whereby fluid shear-mediated deflection of the primary cilium, which decreases intracellular cAMP, leads to cilium shortening and thus decreases flow-induced signaling. May be an ion-channel regulator. Involved in adhesive protein-protein and protein-carbohydrate interactions. Likely to be involved with polycystin-1-interacting protein 1 in the detection, sequestration and exocytosis of senescent mitochondria. The protein is Polycystin-1 of Homo sapiens (Human).